The sequence spans 419 residues: G protein-activated inward rectifier potassium channel 4 (419 aa).

The segment at 1–24 (MAGDSRNAMNQDMEIGVTPRDPKK) is disordered. Over 1-86 (MAGDSRNAMN…LFTTLVDLKW (86 aa)) the chain is Cytoplasmic. S5 is subject to Phosphoserine. Residues 87 to 111 (RFNLLVFTMVYTITWLFFGFIWWLI) form a helical membrane-spanning segment. Topologically, residues 112-135 (AYIRGDLDHVGDREWIPCVENLSG) are extracellular. The helical; Pore-forming intramembrane region spans 136 to 147 (FVSAFLFSIETE). The pore-forming intramembrane region spans 148-154 (TTIGYGF). The short motif at 149-154 (TIGYGF) is the Selectivity filter element. Topologically, residues 155-163 (RVITEKCPE) are extracellular. Residues 164–185 (GIVLLLVQAILGSIVNAFMVGC) traverse the membrane as a helical segment. Residues 186–419 (MFVKISQPKK…SGSQETKDSA (234 aa)) lie on the Cytoplasmic side of the membrane. The disordered stretch occupies residues 381–419 (PSPPLPGGCVGAELGAEAEQEGEEEPEGLSGSQETKDSA). Residues 396-407 (AEAEQEGEEEPE) are compositionally biased toward acidic residues.

Belongs to the inward rectifier-type potassium channel (TC 1.A.2.1) family. KCNJ5 subfamily. In terms of assembly, associates with KCNJ3/GIRK1 or KCNJ6/GIRK2 to form a G-protein-activated heteromultimer pore-forming unit. The resulting inward current is much larger.

It is found in the membrane. The catalysed reaction is K(+)(in) = K(+)(out). Its activity is regulated as follows. Heteromultimer composed of KCNJ3/GIRK1 and KCNJ5/GIRK4 is activated by phosphatidylinositol 4,5 biphosphate (PtdIns(4,5)P2). Its function is as follows. Inward rectifier potassium channels are characterized by a greater tendency to allow potassium to flow into the cell rather than out of it. Their voltage dependence is regulated by the concentration of extracellular potassium; as external potassium is raised, the voltage range of the channel opening shifts to more positive voltages. The inward rectification is mainly due to the blockage of outward current by internal magnesium. This receptor plays a crucial role in regulating the heartbeat. Can be blocked by external barium. This potassium channel is controlled by G proteins. This Bos taurus (Bovine) protein is G protein-activated inward rectifier potassium channel 4 (KCNJ5).